The primary structure comprises 299 residues: Probable 4-deoxy-4-formamido-L-arabinose-phosphoundecaprenol deformylase ArnD (299 aa).

The 262-residue stretch at 2–263 folds into the NodB homology domain; the sequence is IDVGLRIDVD…EASARGIRFV (262 aa).

It belongs to the polysaccharide deacetylase family. ArnD deformylase subfamily.

It carries out the reaction 4-deoxy-4-formamido-alpha-L-arabinopyranosyl di-trans,octa-cis-undecaprenyl phosphate + H2O = 4-amino-4-deoxy-alpha-L-arabinopyranosyl di-trans,octa-cis-undecaprenyl phosphate + formate. It participates in glycolipid biosynthesis; 4-amino-4-deoxy-alpha-L-arabinose undecaprenyl phosphate biosynthesis; 4-amino-4-deoxy-alpha-L-arabinose undecaprenyl phosphate from UDP-4-deoxy-4-formamido-beta-L-arabinose and undecaprenyl phosphate: step 2/2. The protein operates within bacterial outer membrane biogenesis; lipopolysaccharide biosynthesis. Its function is as follows. Catalyzes the deformylation of 4-deoxy-4-formamido-L-arabinose-phosphoundecaprenol to 4-amino-4-deoxy-L-arabinose-phosphoundecaprenol. The modified arabinose is attached to lipid A and is required for resistance to polymyxin and cationic antimicrobial peptides. In Aeromonas salmonicida (strain A449), this protein is Probable 4-deoxy-4-formamido-L-arabinose-phosphoundecaprenol deformylase ArnD.